Consider the following 499-residue polypeptide: Low-affinity inorganic phosphate transporter PitA (499 aa).

The Periplasmic portion of the chain corresponds to 1–4; sequence MLHL. The chain crosses the membrane as a helical span at residues 5 to 25; it reads FAGLDLHTGLLLLLALAFVLF. Residues 26–51 are Cytoplasmic-facing; that stretch reads YEAINGFHDTANAVATVIYTRAMRSQ. Residues 52–72 form a helical membrane-spanning segment; it reads LAVVMAAVFNFLGVLLGGLSV. Topologically, residues 73–93 are periplasmic; it reads AYAIVHMLPTDLLLNMGSSHG. The chain crosses the membrane as a helical span at residues 94–114; that stretch reads LAMVFSMLLAAIIWNLGTWYF. Residues 115–123 lie on the Cytoplasmic side of the membrane; it reads GLPASSSHT. A helical membrane pass occupies residues 124-144; it reads LIGAIIGIGLTNALMTGTSVV. At 145 to 154 the chain is on the periplasmic side; sequence DALNIPKVLS. A helical membrane pass occupies residues 155–175; it reads IFGSLIVSPIVGLVFAGGLIF. Topologically, residues 176–206 are cytoplasmic; it reads LLRRYWSGTKKRARIHLTPAEREKKDGKKKP. Residues 207-227 traverse the membrane as a helical segment; it reads PFWTRIALILSAIGVAFSHGA. At 228–232 the chain is on the periplasmic side; the sequence is NDGQK. Residues 233–253 traverse the membrane as a helical segment; it reads GIGLVMLVLIGVAPAGFVVNM. Topologically, residues 254–381 are cytoplasmic; sequence NATGYEITRT…KSDMLSTIEY (128 aa). A helical membrane pass occupies residues 382 to 402; it reads APVWIIMAVALALGIGTMIGW. Residues 403–429 are Periplasmic-facing; the sequence is RRVATTIGEKIGKKGMTYAQGMSAQMT. Residues 430-450 form a helical membrane-spanning segment; it reads AAVSIGLASYTGMPVSTTHVL. The Cytoplasmic segment spans residues 451 to 472; it reads SSSVAGTMVVDGGGLQRKTVTS. Residues 473-493 form a helical membrane-spanning segment; that stretch reads ILMAWVFTLPAAVLLSGGLYW. The Periplasmic segment spans residues 494 to 499; the sequence is LSLQFL.

This sequence belongs to the inorganic phosphate transporter (PiT) (TC 2.A.20) family. Pit subfamily.

It localises to the cell inner membrane. The enzyme catalyses phosphate(in) + H(+)(in) = phosphate(out) + H(+)(out). Its function is as follows. Low-affinity inorganic phosphate transporter. This chain is Low-affinity inorganic phosphate transporter PitA (pitA), found in Escherichia coli O157:H7.